The following is a 171-amino-acid chain: NADH-quinone oxidoreductase subunit I (171 aa).

4Fe-4S ferredoxin-type domains lie at 63 to 92 and 102 to 131; these read RRYE…IESD and TRYD…ETQI. Cysteine 72, cysteine 75, cysteine 78, cysteine 82, cysteine 111, cysteine 114, cysteine 117, and cysteine 121 together coordinate [4Fe-4S] cluster.

It belongs to the complex I 23 kDa subunit family. In terms of assembly, NDH-1 is composed of 14 different subunits. Subunits NuoA, H, J, K, L, M, N constitute the membrane sector of the complex. It depends on [4Fe-4S] cluster as a cofactor.

It is found in the cell inner membrane. The catalysed reaction is a quinone + NADH + 5 H(+)(in) = a quinol + NAD(+) + 4 H(+)(out). Its function is as follows. NDH-1 shuttles electrons from NADH, via FMN and iron-sulfur (Fe-S) centers, to quinones in the respiratory chain. The immediate electron acceptor for the enzyme in this species is believed to be ubiquinone. Couples the redox reaction to proton translocation (for every two electrons transferred, four hydrogen ions are translocated across the cytoplasmic membrane), and thus conserves the redox energy in a proton gradient. The protein is NADH-quinone oxidoreductase subunit I of Paracidovorax citrulli (strain AAC00-1) (Acidovorax citrulli).